Reading from the N-terminus, the 689-residue chain is uncharacterized protein (689 aa).

Disordered regions lie at residues leucine 121–serine 206, alanine 286–asparagine 305, asparagine 322–histidine 414, and alanine 552–aspartate 611. Residues serine 133 to serine 158 show a composition bias toward low complexity. Residues asparagine 322 to threonine 380 are compositionally biased toward polar residues. Low complexity-rich tracts occupy residues proline 381 to serine 411 and proline 560 to histidine 572.

It localises to the cytoplasm. This is an uncharacterized protein from Schizosaccharomyces pombe (strain 972 / ATCC 24843) (Fission yeast).